Here is a 143-residue protein sequence, read N- to C-terminus: Probable prefoldin subunit 2 (143 aa).

It belongs to the prefoldin subunit beta family. In terms of assembly, heterohexamer of two PFD-alpha type and four PFD-beta type subunits.

Its function is as follows. Binds specifically to cytosolic chaperonin (c-CPN) and transfers target proteins to it. Binds to nascent polypeptide chain and promotes folding in an environment in which there are many competing pathways for nonnative proteins. The chain is Probable prefoldin subunit 2 from Drosophila melanogaster (Fruit fly).